The chain runs to 124 residues: Bactoprenol-linked glucose translocase (124 aa).

4 helical membrane passes run 12–32 (FFSY…VFYA), 45–65 (NIVG…RCSF), 75–95 (FIFI…FDLL), and 96–116 (ALSP…LGYC).

This sequence belongs to the GtrA family.

The protein localises to the cell membrane. It functions in the pathway bacterial outer membrane biogenesis; lipopolysaccharide biosynthesis. Involved in O antigen modification. Involved in the translocation of bactoprenol-linked glucose across the cytoplasmic membrane. This Shigella flexneri protein is Bactoprenol-linked glucose translocase (rfbI).